Consider the following 392-residue polypeptide: S-adenosylmethionine synthase (392 aa).

Residue His-17 participates in ATP binding. Asp-19 is a Mg(2+) binding site. Glu-45 provides a ligand contact to K(+). L-methionine contacts are provided by Glu-58 and Gln-102. The tract at residues 102–112 (QSADIAQGVDA) is flexible loop. ATP-binding positions include 169–171 (DAK), 235–236 (KF), Asp-244, 250–251 (RK), Ala-267, and Lys-271. Asp-244 contacts L-methionine. Position 275 (Lys-275) interacts with L-methionine.

Belongs to the AdoMet synthase family. As to quaternary structure, homotetramer; dimer of dimers. The cofactor is Mg(2+). It depends on K(+) as a cofactor.

It localises to the cytoplasm. The enzyme catalyses L-methionine + ATP + H2O = S-adenosyl-L-methionine + phosphate + diphosphate. The protein operates within amino-acid biosynthesis; S-adenosyl-L-methionine biosynthesis; S-adenosyl-L-methionine from L-methionine: step 1/1. Catalyzes the formation of S-adenosylmethionine (AdoMet) from methionine and ATP. The overall synthetic reaction is composed of two sequential steps, AdoMet formation and the subsequent tripolyphosphate hydrolysis which occurs prior to release of AdoMet from the enzyme. The polypeptide is S-adenosylmethionine synthase (Methylobacterium sp. (strain 4-46)).